The following is a 976-amino-acid chain: Metabotropic glutamate receptor (976 aa).

The first 25 residues, 1–25 (MKQKNNNGTILVVVMVLSWSRVVDL), serve as a signal peptide directing secretion. At 26-626 (KSPSNTHTQD…IQYMKWNSLF (601 aa)) the chain is on the extracellular side. N-linked (GlcNAc...) asparagine glycans are attached at residues asparagine 112 and asparagine 143. L-glutamate is bound by residues serine 158 and 179 to 181 (AST). A glycan (N-linked (GlcNAc...) asparagine) is linked at asparagine 216. L-glutamate is bound at residue tyrosine 229. Asparagine 299 is a glycosylation site (N-linked (GlcNAc...) asparagine). L-glutamate is bound at residue aspartate 310. N-linked (GlcNAc...) asparagine glycosylation is present at asparagine 386. Lysine 417 contacts L-glutamate. N-linked (GlcNAc...) asparagine glycans are attached at residues asparagine 491 and asparagine 524. A helical transmembrane segment spans residues 627–649 (ALIPMAIAIFGIALTSIVIVLFA). The Cytoplasmic segment spans residues 650–663 (KNHDTPLVRASGRE). Residues 664–684 (LSYTLLFGILVCYCNTFALIA) form a helical membrane-spanning segment. Residues 685-695 (KPTIGSCVLQR) are Extracellular-facing. The chain crosses the membrane as a helical span at residues 696-714 (FGIGVGFSIIYSALLTKTN). The Cytoplasmic portion of the chain corresponds to 715–738 (RISRIFHSASKSAQRLKYISPQSQ). The chain crosses the membrane as a helical span at residues 739–759 (VVITTSLIAIQVLITMIWMVV). Residues 760–782 (EPPGTRFYYPDRREVILKCKIQD) lie on the Extracellular side of the membrane. The chain crosses the membrane as a helical span at residues 783–804 (MSFLFSQLYNMILITICTIYAI). Over 805–817 (KTRKIPENFNESK) the chain is Cytoplasmic. The helical transmembrane segment at 818–840 (FIGFTMYTTCIIWLAFVPIYFGT) threads the bilayer. Residues 841–850 (GNSYEVQTTT) are Extracellular-facing. The helical transmembrane segment at 851–876 (LCISISLSASVALVCLYSPKVYILVF) threads the bilayer. The Cytoplasmic segment spans residues 877–976 (HPDKNVRKLT…VEPICHIVNK (100 aa)). Positions 920 to 946 (LTGGAVGTNASSSTLPTQNSPHLDEAS) are disordered. A compositionally biased stretch (polar residues) spans 927–946 (TNASSSTLPTQNSPHLDEAS).

This sequence belongs to the G-protein coupled receptor 3 family. Expressed in the neurons of the larval CNS from the beginning of the first until the third instar. Expression in the third-instar larval CNS is restricted to a discrete number of somas and projections in the brain lobes and in the ventral ganglion. In the ventral nerve cord, expression is detected both in somas and projections. Expressed in the antennal lobes, the optic lobes, the central complex and the median bundle in the adult CNS.

The protein resides in the cell membrane. Functionally, G-protein coupled receptor for glutamate. Ligand binding causes a conformation change that triggers signaling via guanine nucleotide-binding proteins (G proteins) and modulates the activity of down-stream effectors. In Drosophila melanogaster (Fruit fly), this protein is Metabotropic glutamate receptor (mGluR).